Consider the following 514-residue polypeptide: 2-isopropylmalate synthase (514 aa).

In terms of domain architecture, Pyruvate carboxyltransferase spans 5–268 (LIIFDTTLRD…DVGLDTTQIV (264 aa)). The Mn(2+) site is built by Asp-14, His-202, His-204, and Asn-239. Residues 395-514 (KFVSLSQRSE…KDDKLNPQRS (120 aa)) are regulatory domain.

It belongs to the alpha-IPM synthase/homocitrate synthase family. LeuA type 1 subfamily. As to quaternary structure, homodimer. The cofactor is Mn(2+).

The protein localises to the cytoplasm. The catalysed reaction is 3-methyl-2-oxobutanoate + acetyl-CoA + H2O = (2S)-2-isopropylmalate + CoA + H(+). Its pathway is amino-acid biosynthesis; L-leucine biosynthesis; L-leucine from 3-methyl-2-oxobutanoate: step 1/4. Functionally, catalyzes the condensation of the acetyl group of acetyl-CoA with 3-methyl-2-oxobutanoate (2-ketoisovalerate) to form 3-carboxy-3-hydroxy-4-methylpentanoate (2-isopropylmalate). The polypeptide is 2-isopropylmalate synthase (Burkholderia ambifaria (strain ATCC BAA-244 / DSM 16087 / CCUG 44356 / LMG 19182 / AMMD) (Burkholderia cepacia (strain AMMD))).